The sequence spans 134 residues: Small ribosomal subunit protein uS8 (134 aa).

This sequence belongs to the universal ribosomal protein uS8 family. In terms of assembly, part of the 30S ribosomal subunit. Contacts proteins S5 and S12.

Its function is as follows. One of the primary rRNA binding proteins, it binds directly to 16S rRNA central domain where it helps coordinate assembly of the platform of the 30S subunit. The protein is Small ribosomal subunit protein uS8 of Pseudothermotoga lettingae (strain ATCC BAA-301 / DSM 14385 / NBRC 107922 / TMO) (Thermotoga lettingae).